We begin with the raw amino-acid sequence, 329 residues long: Strigolactones hydrolase CXE15 (329 aa).

Residues 83 to 85 (HGG) carry the Involved in the stabilization of the negatively charged intermediate by the formation of the oxyanion hole motif. The (-)-2'-epi-GR24 site is built by Gly85, Gly86, Ser169, and Ser170. Ser169 acts as the Nucleophile in catalysis. Active-site residues include Glu271 and His302.

The protein belongs to the 'GDXG' lipolytic enzyme family. Expressed in axillary buds, leaves, stems, hypocotyls, flowers, siliques, and vasculatures of shoots and roots.

The protein resides in the nucleus. The protein localises to the cytoplasm. Its subcellular location is the cytosol. The catalysed reaction is (-)-2'-epi-GR24 + H2O = (-)-2'-epi-GR24 ABC-rings + 5-hydroxy-3-methylfuran-2(5H)-one. The enzyme catalyses 5-deoxystrigol + H2O = 5-deoxystrigol ABC-rings + 5-hydroxy-3-methylfuran-2(5H)-one. It carries out the reaction orobanchol + H2O = orobanchol ABC-rings + 5-hydroxy-3-methylfuran-2(5H)-one. Its function is as follows. Binds to strigolactones (SLs) such as (-)-2'-epi-GR24(4DO), 5-deoxystrigol (5DS) and orobanchol, and catalyzes their hydrolysis; SL are phytohormones controlling shoot branching and communications between plants and microorganisms. Promotes shoot branching by dampening SL-inhibited axillary bud outgrowth. The polypeptide is Strigolactones hydrolase CXE15 (Arabidopsis thaliana (Mouse-ear cress)).